We begin with the raw amino-acid sequence, 140 residues long: Phosphopantetheine adenylyltransferase (140 aa).

S9 is a binding site for substrate. ATP-binding positions include 9-10 (SF) and H17. Positions 41, 74, and 88 each coordinate substrate. Residues 89–91 (GLR), E99, and 124–130 (KRSLSST) contribute to the ATP site.

The protein belongs to the bacterial CoaD family. Homohexamer. Mg(2+) is required as a cofactor.

It localises to the cytoplasm. It catalyses the reaction (R)-4'-phosphopantetheine + ATP + H(+) = 3'-dephospho-CoA + diphosphate. It participates in cofactor biosynthesis; coenzyme A biosynthesis; CoA from (R)-pantothenate: step 4/5. Functionally, reversibly transfers an adenylyl group from ATP to 4'-phosphopantetheine, yielding dephospho-CoA (dPCoA) and pyrophosphate. The protein is Phosphopantetheine adenylyltransferase of Mycoplasma capricolum subsp. capricolum (strain California kid / ATCC 27343 / NCTC 10154).